Reading from the N-terminus, the 446-residue chain is D(1A) dopamine receptor (446 aa).

Residues Met-1 to Arg-23 lie on the Extracellular side of the membrane. Residue Asn-5 is glycosylated (N-linked (GlcNAc...) asparagine). A helical transmembrane segment spans residues Ile-24–Ile-49. The Cytoplasmic portion of the chain corresponds to Arg-50 to Asn-60. Residues Phe-61 to Ala-87 form a helical membrane-spanning segment. Topologically, residues Gly-88–Cys-96 are extracellular. Cys-96 and Cys-186 are disulfide-bonded. The chain crosses the membrane as a helical span at residues Asn-97–Val-119. Residues Asp-120–Lys-138 are Cytoplasmic-facing. A helical membrane pass occupies residues Ala-139–Trp-163. The Extracellular portion of the chain corresponds to His-164–Arg-192. N-linked (GlcNAc...) asparagine glycosylation occurs at Asn-175. A helical transmembrane segment spans residues Thr-193–Tyr-218. At Arg-219 to Lys-272 the chain is on the cytoplasmic side. The helical transmembrane segment at Thr-273–Gly-299 threads the bilayer. The Extracellular segment spans residues Ser-300–Thr-312. A helical membrane pass occupies residues Phe-313–Phe-337. Residues Arg-338–Thr-446 are Cytoplasmic-facing. S-palmitoyl cysteine attachment occurs at residues Cys-347 and Cys-351.

This sequence belongs to the G-protein coupled receptor 1 family. As to quaternary structure, interacts with DNAJC14 via its C-terminus. Interacts with DRD2. Interacts with DORIP1.

It is found in the cell membrane. It localises to the endoplasmic reticulum membrane. The protein localises to the cell projection. Its subcellular location is the cilium membrane. The protein resides in the dendrite. It is found in the dendritic spine. Functionally, dopamine receptor whose activity is mediated by G proteins which activate adenylyl cyclase. In Macaca mulatta (Rhesus macaque), this protein is D(1A) dopamine receptor (DRD1).